Reading from the N-terminus, the 430-residue chain is Glutamate-1-semialdehyde 2,1-aminomutase (430 aa).

An N6-(pyridoxal phosphate)lysine modification is found at Lys269.

It belongs to the class-III pyridoxal-phosphate-dependent aminotransferase family. HemL subfamily. Homodimer. Pyridoxal 5'-phosphate serves as cofactor.

Its subcellular location is the cytoplasm. The enzyme catalyses (S)-4-amino-5-oxopentanoate = 5-aminolevulinate. It participates in porphyrin-containing compound metabolism; protoporphyrin-IX biosynthesis; 5-aminolevulinate from L-glutamyl-tRNA(Glu): step 2/2. The polypeptide is Glutamate-1-semialdehyde 2,1-aminomutase (Desulfitobacterium hafniense (strain Y51)).